The chain runs to 1624 residues: Reverse gyrase (1624 aa).

Residues Met-1–Glu-42 form an RG N-terminal-type zinc finger. Residues Cys-9, Cys-12, Cys-27, and Cys-30 each coordinate Zn(2+). ATP contacts are provided by residues Gln-89 and Ala-106–Ser-113. One can recognise a Helicase ATP-binding domain in the interval Val-93–Leu-256. Residues Asp-213–Asp-216 carry the DEAD box motif. The segment at Asp-636–Arg-1624 is topoisomerase I. One can recognise a Toprim domain in the interval Ser-640–Val-803. Residue Glu-646 participates in Mg(2+) binding. An RG C-terminal-type zinc finger spans residues Ile-720–Asp-749. Zn(2+) contacts are provided by Cys-723, Cys-726, Cys-739, and Cys-742. Asp-772 provides a ligand contact to Mg(2+). Residues Asn-819–Val-1623 enclose the Topo IA-type catalytic domain. The DOD-type homing endonuclease domain occupies Ile-1107 to Ile-1222. The active-site O-(5'-phospho-DNA)-tyrosine intermediate is Tyr-1366.

In the N-terminal section; belongs to the DEAD box helicase family. DDVD subfamily. This sequence in the C-terminal section; belongs to the type IA topoisomerase family. In terms of assembly, monomer. It depends on Zn(2+) as a cofactor. Mg(2+) serves as cofactor. This protein undergoes a protein self splicing that involves a post-translational excision of the intervening region (intein) followed by peptide ligation.

It localises to the cytoplasm. It carries out the reaction ATP + H2O = ADP + phosphate + H(+). Functionally, modifies the topological state of DNA by introducing positive supercoils in an ATP-dependent process, increasing the linking number in steps of +1. Binds to single-stranded DNA, transiently cleaves and then rejoins the ends, introducing a positive supercoil in the process. The scissile phosphodiester is attacked by the catalytic tyrosine of the enzyme, resulting in the formation of a DNA-(5'-phosphotyrosyl)-enzyme intermediate. Probably involved in rewinding DNA strands in regions of the chromosome that have opened up to allow replication, transcription, DNA repair and/or for DNA protection. The sequence is that of Reverse gyrase from Pyrococcus horikoshii (strain ATCC 700860 / DSM 12428 / JCM 9974 / NBRC 100139 / OT-3).